Reading from the N-terminus, the 415-residue chain is Glutamyl-tRNA reductase (415 aa).

Residues 49–52 (TCNR), S106, 111–113 (EPQ), and Q117 contribute to the substrate site. The active-site Nucleophile is C50. 186–191 (GAGETI) is a binding site for NADP(+).

It belongs to the glutamyl-tRNA reductase family. As to quaternary structure, homodimer.

The catalysed reaction is (S)-4-amino-5-oxopentanoate + tRNA(Glu) + NADP(+) = L-glutamyl-tRNA(Glu) + NADPH + H(+). Its pathway is porphyrin-containing compound metabolism; protoporphyrin-IX biosynthesis; 5-aminolevulinate from L-glutamyl-tRNA(Glu): step 1/2. In terms of biological role, catalyzes the NADPH-dependent reduction of glutamyl-tRNA(Glu) to glutamate 1-semialdehyde (GSA). The chain is Glutamyl-tRNA reductase from Teredinibacter turnerae (strain ATCC 39867 / T7901).